The sequence spans 37 residues: Ferredoxin--NADP reductase, chloroplastic (37 aa).

NADP(+) contacts are provided by residues serine 3 and 24–25 (SR).

The protein belongs to the ferredoxin--NADP reductase type 1 family. FAD is required as a cofactor.

It localises to the plastid. The protein resides in the chloroplast stroma. It is found in the chloroplast thylakoid membrane. It carries out the reaction 2 reduced [2Fe-2S]-[ferredoxin] + NADP(+) + H(+) = 2 oxidized [2Fe-2S]-[ferredoxin] + NADPH. The protein operates within energy metabolism; photosynthesis. In terms of biological role, may play a key role in regulating the relative amounts of cyclic and non-cyclic electron flow to meet the demands of the plant for ATP and reducing power. The sequence is that of Ferredoxin--NADP reductase, chloroplastic from Imperata cylindrica (Cogon grass).